The primary structure comprises 265 residues: Glutamate racemase (265 aa).

Residues 12 to 13 (DS) and 44 to 45 (YG) each bind substrate. The active-site Proton donor/acceptor is C75. A substrate-binding site is contributed by 76–77 (NT). C186 functions as the Proton donor/acceptor in the catalytic mechanism. 187-188 (TH) is a substrate binding site.

This sequence belongs to the aspartate/glutamate racemases family.

The enzyme catalyses L-glutamate = D-glutamate. It functions in the pathway cell wall biogenesis; peptidoglycan biosynthesis. Provides the (R)-glutamate required for cell wall biosynthesis. In Pseudomonas aeruginosa (strain UCBPP-PA14), this protein is Glutamate racemase.